Consider the following 306-residue polypeptide: Homoserine kinase (306 aa).

95–105 provides a ligand contact to ATP; the sequence is PQSRGLGSSAA.

Belongs to the GHMP kinase family. Homoserine kinase subfamily.

It localises to the cytoplasm. The enzyme catalyses L-homoserine + ATP = O-phospho-L-homoserine + ADP + H(+). It functions in the pathway amino-acid biosynthesis; L-threonine biosynthesis; L-threonine from L-aspartate: step 4/5. Functionally, catalyzes the ATP-dependent phosphorylation of L-homoserine to L-homoserine phosphate. The chain is Homoserine kinase from Corynebacterium urealyticum (strain ATCC 43042 / DSM 7109).